Reading from the N-terminus, the 1127-residue chain is Carbamoyl phosphate synthase large chain (1127 aa).

Positions 1-402 are carboxyphosphate synthetic domain; it reads MPKRTDIKSV…SLGKAMRSID (402 aa). Arg-129, Arg-169, Gly-175, Gly-176, Glu-208, Ile-210, Glu-215, Gly-241, Val-242, His-243, Gln-285, and Glu-299 together coordinate ATP. One can recognise an ATP-grasp 1 domain in the interval 133–328; that stretch reads KKVVDEAGAE…IAKIATKLAL (196 aa). Residues Gln-285, Glu-299, and Asn-301 each coordinate Mg(2+). The Mn(2+) site is built by Gln-285, Glu-299, and Asn-301. Residues 403-551 form an oligomerization domain region; that stretch reads KRHMGFNWDG…YYYSCYADET (149 aa). Residues 552 to 962 form a carbamoyl phosphate synthetic domain region; that stretch reads ELRPREREAV…AFAKSQLAAY (411 aa). One can recognise an ATP-grasp 2 domain in the interval 681–881; that stretch reads GEVLKKAEMN…LAKAAARIMA (201 aa). Positions 717, 765, 767, 772, 797, 798, 799, 800, 840, and 852 each coordinate ATP. Mg(2+) contacts are provided by Gln-840, Glu-852, and Asn-854. Mn(2+) is bound by residues Gln-840, Glu-852, and Asn-854. The interval 963–1127 is allosteric domain; that stretch reads DGGLPTHGNV…QLFELERREF (165 aa). The MGS-like domain occupies 964-1127; the sequence is GGLPTHGNVF…QLFELERREF (164 aa).

Belongs to the CarB family. As to quaternary structure, composed of two chains; the small (or glutamine) chain promotes the hydrolysis of glutamine to ammonia, which is used by the large (or ammonia) chain to synthesize carbamoyl phosphate. Tetramer of heterodimers (alpha,beta)4. The cofactor is Mg(2+). Mn(2+) is required as a cofactor.

The catalysed reaction is hydrogencarbonate + L-glutamine + 2 ATP + H2O = carbamoyl phosphate + L-glutamate + 2 ADP + phosphate + 2 H(+). It catalyses the reaction hydrogencarbonate + NH4(+) + 2 ATP = carbamoyl phosphate + 2 ADP + phosphate + 2 H(+). Its pathway is amino-acid biosynthesis; L-arginine biosynthesis; carbamoyl phosphate from bicarbonate: step 1/1. It participates in pyrimidine metabolism; UMP biosynthesis via de novo pathway; (S)-dihydroorotate from bicarbonate: step 1/3. In terms of biological role, large subunit of the glutamine-dependent carbamoyl phosphate synthetase (CPSase). CPSase catalyzes the formation of carbamoyl phosphate from the ammonia moiety of glutamine, carbonate, and phosphate donated by ATP, constituting the first step of 2 biosynthetic pathways, one leading to arginine and/or urea and the other to pyrimidine nucleotides. The large subunit (synthetase) binds the substrates ammonia (free or transferred from glutamine from the small subunit), hydrogencarbonate and ATP and carries out an ATP-coupled ligase reaction, activating hydrogencarbonate by forming carboxy phosphate which reacts with ammonia to form carbamoyl phosphate. This Bifidobacterium longum (strain DJO10A) protein is Carbamoyl phosphate synthase large chain.